A 426-amino-acid chain; its full sequence is Enolase (426 aa).

Residue Q165 coordinates (2R)-2-phosphoglycerate. E207 (proton donor) is an active-site residue. Mg(2+) is bound by residues D244, E285, and D312. (2R)-2-phosphoglycerate contacts are provided by K337, R366, S367, and K388. K337 (proton acceptor) is an active-site residue.

Belongs to the enolase family. Mg(2+) serves as cofactor.

Its subcellular location is the cytoplasm. It is found in the secreted. It localises to the cell surface. The enzyme catalyses (2R)-2-phosphoglycerate = phosphoenolpyruvate + H2O. It functions in the pathway carbohydrate degradation; glycolysis; pyruvate from D-glyceraldehyde 3-phosphate: step 4/5. In terms of biological role, catalyzes the reversible conversion of 2-phosphoglycerate (2-PG) into phosphoenolpyruvate (PEP). It is essential for the degradation of carbohydrates via glycolysis. The protein is Enolase of Cyanothece sp. (strain PCC 7425 / ATCC 29141).